The following is a 333-amino-acid chain: Protein 2 (333 aa).

Disordered stretches follow at residues 1 to 41 (MTGR…SENA) and 57 to 84 (LGAG…LPPT). Over residues 24-33 (QETTKQTTSA) the composition is skewed to polar residues. Positions 62-79 (DYDETEADPADTYGDTEA) are enriched in acidic residues.

This is Protein 2 from Lactuca sativa (Garden lettuce).